The following is a 98-amino-acid chain: Lipolysis-activating peptide 1-beta chain (98 aa).

The first 22 residues, 1–22, serve as a signal peptide directing secretion; it reads MANVQVIFVAYIAVIAFSMVYG. Residues 23–91 enclose the LCN-type CS-alpha/beta domain; sequence DDYKPFGEHN…FLKAMEKQCP (69 aa). Disulfide bonds link C37-C60, C45-C70, and C49-C72.

It belongs to the long (3 C-C) scorpion toxin superfamily. In terms of assembly, homodimer; disulfide-linked or monomer (edited version) or heterodimer of an alpha chain (AC B8XH01) and this beta chain (non-edited version). In terms of tissue distribution, expressed by the venom gland.

It localises to the secreted. Functionally, the homodimer inhibits HMG-CoA reductase (HMGCR) (32% of inhibition produced by 0.6 uM), a glycoprotein involved in the control of cholesterol biosynthesis. The inhibitory effects of bumarsin are seen at much lower concentrations (0.6 uM) than that for statins such as atorvastatin (5 mM) and simvastatin (10 uM). In addition to inhibition of HMG-CoA reductase, this protein lowers cholesterol levels by inducing steroid hormone synthesis via StAR, and by increasing reverse cholesterol transport mediated by the induction of ABCA1 and APOA1. The heterodimer non-edited LVP1 induces lipolysis in rat adipocytes. Induction of lipolysis by LVP1 appears to be mediated through the beta-2 adrenergic receptor pathway (ADRB2). Its function is as follows. The monomer edited version, similar to alpha-toxins, may modulate voltage-gated sodium channels (Nav) and may block voltage-gated potassium channels (Kv). The sequence is that of Lipolysis-activating peptide 1-beta chain from Buthus israelis (Israeli scorpion).